The primary structure comprises 511 residues: Xylose import ATP-binding protein XylG (511 aa).

2 ABC transporter domains span residues 6 to 244 (LEMR…VGRE) and 261 to 506 (FEAR…IGKP). Position 38–45 (38–45 (GENGAGKS)) interacts with ATP.

The protein belongs to the ABC transporter superfamily. Xylose importer (TC 3.A.1.2.4) family. The complex is composed of two ATP-binding proteins (XylG), two transmembrane proteins (XylH) and a solute-binding protein (XylF).

It localises to the cell inner membrane. The catalysed reaction is D-xylose(out) + ATP + H2O = D-xylose(in) + ADP + phosphate + H(+). Part of the ABC transporter complex XylFGH involved in xylose import. Responsible for energy coupling to the transport system. This Brucella abortus (strain 2308) protein is Xylose import ATP-binding protein XylG.